We begin with the raw amino-acid sequence, 360 residues long: Phosphoserine aminotransferase (360 aa).

An L-glutamate-binding site is contributed by Arg41. Pyridoxal 5'-phosphate-binding positions include 75 to 76 (AS), Trp99, Thr152, Asp171, and Gln194. Lys195 is subject to N6-(pyridoxal phosphate)lysine. 236 to 237 (NT) contacts pyridoxal 5'-phosphate.

This sequence belongs to the class-V pyridoxal-phosphate-dependent aminotransferase family. SerC subfamily. Homodimer. Pyridoxal 5'-phosphate is required as a cofactor.

It is found in the cytoplasm. The enzyme catalyses O-phospho-L-serine + 2-oxoglutarate = 3-phosphooxypyruvate + L-glutamate. The catalysed reaction is 4-(phosphooxy)-L-threonine + 2-oxoglutarate = (R)-3-hydroxy-2-oxo-4-phosphooxybutanoate + L-glutamate. It participates in amino-acid biosynthesis; L-serine biosynthesis; L-serine from 3-phospho-D-glycerate: step 2/3. The protein operates within cofactor biosynthesis; pyridoxine 5'-phosphate biosynthesis; pyridoxine 5'-phosphate from D-erythrose 4-phosphate: step 3/5. In terms of biological role, catalyzes the reversible conversion of 3-phosphohydroxypyruvate to phosphoserine and of 3-hydroxy-2-oxo-4-phosphonooxybutanoate to phosphohydroxythreonine. The chain is Phosphoserine aminotransferase from Porphyromonas gingivalis (strain ATCC 33277 / DSM 20709 / CIP 103683 / JCM 12257 / NCTC 11834 / 2561).